We begin with the raw amino-acid sequence, 117 residues long: Non-specific lipid-transfer protein Lac s 1 (117 aa).

Residues 1–25 form the signal peptide; sequence MARMAMMILCVVLTCMVVATPYTEA. 4 disulfides stabilise this stretch: cysteine 29/cysteine 76, cysteine 39/cysteine 53, cysteine 54/cysteine 99, and cysteine 74/cysteine 113.

The protein belongs to the plant LTP family.

Its function is as follows. Plant non-specific lipid-transfer proteins transfer phospholipids as well as galactolipids across membranes. May play a role in wax or cutin deposition in the cell walls of expanding epidermal cells and certain secretory tissues. The protein is Non-specific lipid-transfer protein Lac s 1 of Lactuca sativa (Garden lettuce).